The following is a 424-amino-acid chain: MKQLLVLILSLYTTLAWTVLEVTILKQDENAFPIVISDFSVIGDANQGKIIAHVIRNNFNRSGEFSASSVNYVINNKPNFDKWKAKKIEAIVLGKLEKISKKVFNVEIELLDVFSKKILYKDKFVVHNRGIRRIAHYLSDQIYHVLLGEKGSFDTRLAYISVTNKGKGEREYRLEISDSDAQNPQTILKSKKPILSPVWSPDQNKIAYVSFKNARSEVFIQYPFVRRKTQKLPYFDGIASAPSWHPNGKNLLLTLSKNGNKDIYSYQLSSKKLTRLTTDVGIDTEASYSSEGDKIVFTSNRSGQVQVYIKDLKTNKINRATFKGRYNAKAVFSPDDKSLAMVHRVGKDYRIALLDIATKNLTIMTNNQLDESPFFSPNGSMIIFATNKGSSSVLSVVSILGRQTFELASKAGEVREPNWSHYLK.

The N-terminal stretch at 1-16 (MKQLLVLILSLYTTLA) is a signal peptide.

This sequence belongs to the TolB family. As to quaternary structure, the Tol-Pal system is composed of five core proteins: the inner membrane proteins TolA, TolQ and TolR, the periplasmic protein TolB and the outer membrane protein Pal. They form a network linking the inner and outer membranes and the peptidoglycan layer.

It localises to the periplasm. Part of the Tol-Pal system, which plays a role in outer membrane invagination during cell division and is important for maintaining outer membrane integrity. In Ruthia magnifica subsp. Calyptogena magnifica, this protein is Tol-Pal system protein TolB.